The chain runs to 267 residues: Ribonuclease HII (267 aa).

Residues 57–245 (WPVAGCDEVG…VVAARERHRA (189 aa)) form the RNase H type-2 domain. Residues D63, E64, and D154 each coordinate a divalent metal cation.

It belongs to the RNase HII family. It depends on Mn(2+) as a cofactor. Requires Mg(2+) as cofactor.

It localises to the cytoplasm. It catalyses the reaction Endonucleolytic cleavage to 5'-phosphomonoester.. Its function is as follows. Endonuclease that specifically degrades the RNA of RNA-DNA hybrids. The protein is Ribonuclease HII of Nitrobacter hamburgensis (strain DSM 10229 / NCIMB 13809 / X14).